We begin with the raw amino-acid sequence, 295 residues long: Protoheme IX farnesyltransferase 2 (295 aa).

The next 9 helical transmembrane spans lie at 9-29 (ITKP…FFLA), 36-56 (FALF…GCVF), 83-103 (LTLA…LLYV), 108-128 (LAAF…SLWL), 135-155 (GTLV…CAVS), 163-183 (VTLL…IAIF), 209-229 (IVLY…GGYA), 230-250 (GLGY…MAWG), and 264-284 (VFGF…VDSQ).

The protein belongs to the UbiA prenyltransferase family. Protoheme IX farnesyltransferase subfamily.

The protein resides in the cell inner membrane. The catalysed reaction is heme b + (2E,6E)-farnesyl diphosphate + H2O = Fe(II)-heme o + diphosphate. It participates in porphyrin-containing compound metabolism; heme O biosynthesis; heme O from protoheme: step 1/1. Its function is as follows. Converts heme B (protoheme IX) to heme O by substitution of the vinyl group on carbon 2 of heme B porphyrin ring with a hydroxyethyl farnesyl side group. The sequence is that of Protoheme IX farnesyltransferase 2 from Pseudomonas entomophila (strain L48).